Here is a 735-residue protein sequence, read N- to C-terminus: Funoran endo-beta-hydrolase (735 aa).

The N-terminal stretch at 1 to 27 (MRVKSVYKKLSVSFILVMLSASQEVNS) is a signal peptide. The Proton donor role is filled by glutamate 200. Catalysis depends on glutamate 322, which acts as the Nucleophile.

It belongs to the glycosyl hydrolase 86 family.

It catalyses the reaction Endohydrolysis of beta-(1-&gt;4)-linkages between beta-D-galactopyranose-6-sulfate and 3,6-anhydro-alpha-L-galactopyranose units in funoran.. The enzyme catalyses Hydrolysis of (1-&gt;4)-beta-D-galactosidic linkages in agarose, giving the tetramer as the predominant product.. Its activity is regulated as follows. Agarase activity is enhanced in the presence of NaCl. Agarase activity is significantly inhibited by Zn(2+) and slightly activated by several divalent ions including Mg(2+), Cd(2+) and Ca(2+). Its function is as follows. Endohydrolase that cleaves the beta-1,4 glycosidic bond between beta-D-galactopyranose-6-sulfate (G6S) and 3,6-anhydro-alpha-L-galactopyranose (LA) unit of funoran, a polysaccharide produced by red algae of the genus Gloiopeltis. It releases the disaccharide LA-G6S as the predominant end product. Also acts as a random endo-acting beta-agarase, which can hydrolyze agarose tetrasaccharides and hexasaccharides, and produces disaccharides as smallest products. Besides typical agarose oligosaccharides, it can use methylated galactoses. The enzyme exhibits higher catalytic efficiency towards agarose, but binds funoran preferentially. Has no activity on porphyran. This chain is Funoran endo-beta-hydrolase, found in Wenyingzhuangia aestuarii.